Here is a 284-residue protein sequence, read N- to C-terminus: MEMO1 family protein Mevan_0697 (284 aa).

This sequence belongs to the MEMO1 family.

The polypeptide is MEMO1 family protein Mevan_0697 (Methanococcus vannielii (strain ATCC 35089 / DSM 1224 / JCM 13029 / OCM 148 / SB)).